Consider the following 104-residue polypeptide: Co-chaperonin GroES 2 (104 aa).

Belongs to the GroES chaperonin family. Heptamer of 7 subunits arranged in a ring. Interacts with the chaperonin GroEL.

It is found in the cytoplasm. Functionally, together with the chaperonin GroEL, plays an essential role in assisting protein folding. The GroEL-GroES system forms a nano-cage that allows encapsulation of the non-native substrate proteins and provides a physical environment optimized to promote and accelerate protein folding. GroES binds to the apical surface of the GroEL ring, thereby capping the opening of the GroEL channel. The protein is Co-chaperonin GroES 2 of Bradyrhizobium diazoefficiens (strain JCM 10833 / BCRC 13528 / IAM 13628 / NBRC 14792 / USDA 110).